The following is a 311-amino-acid chain: Ribosomal RNA small subunit methyltransferase A (311 aa).

Residues N29, V31, G56, E77, D107, and N126 each contribute to the S-adenosyl-L-methionine site.

The protein belongs to the class I-like SAM-binding methyltransferase superfamily. rRNA adenine N(6)-methyltransferase family. RsmA subfamily.

Its subcellular location is the cytoplasm. It catalyses the reaction adenosine(1518)/adenosine(1519) in 16S rRNA + 4 S-adenosyl-L-methionine = N(6)-dimethyladenosine(1518)/N(6)-dimethyladenosine(1519) in 16S rRNA + 4 S-adenosyl-L-homocysteine + 4 H(+). Its function is as follows. Specifically dimethylates two adjacent adenosines (A1518 and A1519) in the loop of a conserved hairpin near the 3'-end of 16S rRNA in the 30S particle. May play a critical role in biogenesis of 30S subunits. The protein is Ribosomal RNA small subunit methyltransferase A of Mycolicibacterium vanbaalenii (strain DSM 7251 / JCM 13017 / BCRC 16820 / KCTC 9966 / NRRL B-24157 / PYR-1) (Mycobacterium vanbaalenii).